Consider the following 297-residue polypeptide: Cell division protein FtsX (297 aa).

Topologically, residues Met-1–Thr-21 are cytoplasmic. A helical membrane pass occupies residues Ile-22–Val-42. Residues Arg-43–Asn-171 are Extracellular-facing. A helical membrane pass occupies residues Ala-172–Val-192. Residues Gln-193 to Pro-219 are Cytoplasmic-facing. A helical transmembrane segment spans residues Phe-220 to Met-240. The Extracellular segment spans residues Val-241–Asp-267. A helical transmembrane segment spans residues Ile-268–Tyr-288. Over Leu-289–Arg-297 the chain is Cytoplasmic.

The protein belongs to the ABC-4 integral membrane protein family. FtsX subfamily. Forms a membrane-associated complex with FtsE.

It localises to the cell membrane. Its function is as follows. Part of the ABC transporter FtsEX involved in cellular division. The sequence is that of Cell division protein FtsX from Mycobacterium tuberculosis (strain ATCC 25177 / H37Ra).